A 161-amino-acid chain; its full sequence is Allophycocyanin subunit alpha-B (161 aa).

N71 is modified (N4-methylasparagine). Residue C81 participates in (2R,3E)-phycocyanobilin binding.

Belongs to the phycobiliprotein family. Heterodimer of an alpha-B and a beta chain forming AP-B. In terms of processing, contains one covalently linked bilin chromophore. The chromophore is added by phycocyanobilin lyase CpcUS.

Its subcellular location is the cellular thylakoid membrane. Functionally, a variant alpha-allophycocyanin (AP) which forms a complex with beta-AP with maximum absorption at approximately 670 nanometers. It is an important phycobilisome terminal emitter involved in energy transfer to photosystem I. The chain is Allophycocyanin subunit alpha-B (apcD) from Picosynechococcus sp. (strain ATCC 27264 / PCC 7002 / PR-6) (Agmenellum quadruplicatum).